The chain runs to 501 residues: L-arabinose isomerase (501 aa).

Mn(2+) contacts are provided by glutamate 306, glutamate 333, histidine 350, and histidine 450.

It belongs to the arabinose isomerase family. As to quaternary structure, homohexamer. Mn(2+) serves as cofactor.

The enzyme catalyses beta-L-arabinopyranose = L-ribulose. It participates in carbohydrate degradation; L-arabinose degradation via L-ribulose; D-xylulose 5-phosphate from L-arabinose (bacterial route): step 1/3. Catalyzes the conversion of L-arabinose to L-ribulose. This chain is L-arabinose isomerase, found in Pectobacterium atrosepticum (strain SCRI 1043 / ATCC BAA-672) (Erwinia carotovora subsp. atroseptica).